Consider the following 327-residue polypeptide: Phospho-N-acetylmuramoyl-pentapeptide-transferase (327 aa).

Transmembrane regions (helical) follow at residues 3 to 23, 51 to 71, 79 to 99, 115 to 135, 140 to 160, 172 to 192, 197 to 217, 223 to 243, 248 to 268, and 306 to 326; these read TAIIAGITTFILTIIGIPAFI, TMGGTVFLLASIVASFVIALF, VTTILFILFLYGLVGFLDDFL, LFLQLVGGVVFYLFFERHGGG, VFGFPLELGFLYIFFVLFWLV, IDGLASISVVISLGAYAVIAL, FDLLIVIFSMIGGLLGFFGFN, IFMGDVGSLALGGMLAALSIA, WTLLLIGIVYVFETASVMLQV, and VDFLFWGIGLVASLITLAILY.

This sequence belongs to the glycosyltransferase 4 family. MraY subfamily. Mg(2+) serves as cofactor.

Its subcellular location is the cell membrane. The enzyme catalyses UDP-N-acetyl-alpha-D-muramoyl-L-alanyl-gamma-D-glutamyl-L-lysyl-D-alanyl-D-alanine + di-trans,octa-cis-undecaprenyl phosphate = Mur2Ac(oyl-L-Ala-gamma-D-Glu-L-Lys-D-Ala-D-Ala)-di-trans,octa-cis-undecaprenyl diphosphate + UMP. The protein operates within cell wall biogenesis; peptidoglycan biosynthesis. Catalyzes the initial step of the lipid cycle reactions in the biosynthesis of the cell wall peptidoglycan: transfers peptidoglycan precursor phospho-MurNAc-pentapeptide from UDP-MurNAc-pentapeptide onto the lipid carrier undecaprenyl phosphate, yielding undecaprenyl-pyrophosphoryl-MurNAc-pentapeptide, known as lipid I. This Streptococcus gordonii (strain Challis / ATCC 35105 / BCRC 15272 / CH1 / DL1 / V288) protein is Phospho-N-acetylmuramoyl-pentapeptide-transferase.